A 206-amino-acid chain; its full sequence is A-type ATP synthase subunit E (206 aa).

This sequence belongs to the V-ATPase E subunit family. Has multiple subunits with at least A(3), B(3), C, D, E, F, H, I and proteolipid K(x).

Its subcellular location is the cell membrane. Component of the A-type ATP synthase that produces ATP from ADP in the presence of a proton gradient across the membrane. The sequence is that of A-type ATP synthase subunit E from Methanothermobacter thermautotrophicus (strain ATCC 29096 / DSM 1053 / JCM 10044 / NBRC 100330 / Delta H) (Methanobacterium thermoautotrophicum).